A 334-amino-acid polypeptide reads, in one-letter code: Retinol dehydrogenase 13 (334 aa).

S2 is subject to N-acetylserine. Residue 45–51 participates in NADP(+) binding; sequence GANTGIG. A substrate-binding site is contributed by S174. Y200 (proton acceptor) is an active-site residue.

Belongs to the short-chain dehydrogenases/reductases (SDR) family.

The protein resides in the mitochondrion inner membrane. It carries out the reaction all-trans-retinol + NADP(+) = all-trans-retinal + NADPH + H(+). The protein operates within cofactor metabolism; retinol metabolism. Its function is as follows. Retinol dehydrogenase with a clear preference for NADP. Oxidizes all-trans-retinol, but seems to reduce all-trans-retinal with much higher efficiency. Has no activity towards steroid. This chain is Retinol dehydrogenase 13 (Rdh13), found in Mus musculus (Mouse).